Here is a 156-residue protein sequence, read N- to C-terminus: MSRRNRAPRRDVPPDPKYGSRLVTMLIHKLMMRGKASLAARILYDALEIVRERTGQDPLPVLENAVRNATPLVEVKARRVGGATYQVPVEVRAERGTSLALRWLVTFSRTRPGRTMSAKLANEIIDAANETGNAIRRREEVHRMAEANKAFAHYRY.

Belongs to the universal ribosomal protein uS7 family. As to quaternary structure, part of the 30S ribosomal subunit. Contacts proteins S9 and S11.

Functionally, one of the primary rRNA binding proteins, it binds directly to 16S rRNA where it nucleates assembly of the head domain of the 30S subunit. Is located at the subunit interface close to the decoding center, probably blocks exit of the E-site tRNA. The chain is Small ribosomal subunit protein uS7 from Synechococcus sp. (strain JA-3-3Ab) (Cyanobacteria bacterium Yellowstone A-Prime).